The chain runs to 374 residues: Isopentenyl-diphosphate delta-isomerase (374 aa).

Residue Arg13–Lys14 participates in substrate binding. FMN contacts are provided by residues Gly71 to Thr73, Ser104, and Asn132. Ser104–Arg106 is a substrate binding site. Gln171 contacts substrate. Glu172 provides a ligand contact to Mg(2+). FMN is bound by residues Lys203, Thr233, Gly282–Arg284, and Ala303–Leu304.

It belongs to the IPP isomerase type 2 family. Homooctamer. Dimer of tetramers. Requires FMN as cofactor. NADPH is required as a cofactor. It depends on Mg(2+) as a cofactor.

It is found in the cytoplasm. It catalyses the reaction isopentenyl diphosphate = dimethylallyl diphosphate. Involved in the biosynthesis of isoprenoids. Catalyzes the 1,3-allylic rearrangement of the homoallylic substrate isopentenyl (IPP) to its allylic isomer, dimethylallyl diphosphate (DMAPP). This is Isopentenyl-diphosphate delta-isomerase from Thermococcus kodakarensis (strain ATCC BAA-918 / JCM 12380 / KOD1) (Pyrococcus kodakaraensis (strain KOD1)).